Here is a 153-residue protein sequence, read N- to C-terminus: UPF0266 membrane protein YPTB1631 (153 aa).

Helical transmembrane passes span 6–26 (LVLV…EFIM), 45–65 (LDCM…VMAH), and 67–87 (APLT…ISYI).

It belongs to the UPF0266 family.

Its subcellular location is the cell inner membrane. The polypeptide is UPF0266 membrane protein YPTB1631 (Yersinia pseudotuberculosis serotype I (strain IP32953)).